Here is a 371-residue protein sequence, read N- to C-terminus: Solute carrier family 35 member F6 (371 aa).

Residues Met1–Gly18 form the signal peptide. 2 helical membrane-spanning segments follow: residues Phe48–Leu68 and Leu89–Leu109. The EamA domain occupies Leu104–Leu160. Residue Asn110 is glycosylated (N-linked (GlcNAc...) asparagine). Helical transmembrane passes span Phe117–Gly137, Leu140–Leu160, Val176–Leu196, Gly216–Gly236, Leu261–Ile281, Leu295–Trp312, and Ala317–Leu336. The tract at residues Glu352–Ser371 is disordered. Thr365 bears the Phosphothreonine mark.

It belongs to the SLC35F solute transporter family. As to quaternary structure, interacts with SLC25A5. Expressed in pancreatic ductal adenocarcinoma (PDAC) (at protein level). Strongly expressed in prostate and thyroid. Weakly expressed in lung, heart, liver and kidney.

It localises to the mitochondrion. The protein resides in the lysosome membrane. Functionally, involved in the maintenance of mitochondrial membrane potential in pancreatic ductal adenocarcinoma (PDAC) cells. Promotes pancreatic ductal adenocarcinoma (PDAC) cell growth. May play a role as a nucleotide-sugar transporter. The polypeptide is Solute carrier family 35 member F6 (SLC35F6) (Homo sapiens (Human)).